Reading from the N-terminus, the 81-residue chain is ATP synthase subunit c, chloroplastic (81 aa).

Helical transmembrane passes span 3 to 23 (PIIC…GAIG) and 57 to 77 (LAFM…IIFA).

This sequence belongs to the ATPase C chain family. As to quaternary structure, F-type ATPases have 2 components, F(1) - the catalytic core - and F(0) - the membrane proton channel. F(1) has five subunits: alpha(3), beta(3), gamma(1), delta(1), epsilon(1). F(0) has four main subunits: a(1), b(1), b'(1) and c(10-14). The alpha and beta chains form an alternating ring which encloses part of the gamma chain. F(1) is attached to F(0) by a central stalk formed by the gamma and epsilon chains, while a peripheral stalk is formed by the delta, b and b' chains.

It is found in the plastid. It localises to the chloroplast thylakoid membrane. F(1)F(0) ATP synthase produces ATP from ADP in the presence of a proton or sodium gradient. F-type ATPases consist of two structural domains, F(1) containing the extramembraneous catalytic core and F(0) containing the membrane proton channel, linked together by a central stalk and a peripheral stalk. During catalysis, ATP synthesis in the catalytic domain of F(1) is coupled via a rotary mechanism of the central stalk subunits to proton translocation. In terms of biological role, key component of the F(0) channel; it plays a direct role in translocation across the membrane. A homomeric c-ring of between 10-14 subunits forms the central stalk rotor element with the F(1) delta and epsilon subunits. This chain is ATP synthase subunit c, chloroplastic, found in Euglena gracilis.